A 115-amino-acid polypeptide reads, in one-letter code: Phosphoribosyl-AMP cyclohydrolase (115 aa).

Asp-80 is a Mg(2+) binding site. Residue Cys-81 participates in Zn(2+) binding. Mg(2+) is bound by residues Asp-82 and Asp-84. Residues Cys-97 and Cys-104 each contribute to the Zn(2+) site.

This sequence belongs to the PRA-CH family. In terms of assembly, homodimer. Requires Mg(2+) as cofactor. The cofactor is Zn(2+).

The protein resides in the cytoplasm. It carries out the reaction 1-(5-phospho-beta-D-ribosyl)-5'-AMP + H2O = 1-(5-phospho-beta-D-ribosyl)-5-[(5-phospho-beta-D-ribosylamino)methylideneamino]imidazole-4-carboxamide. Its pathway is amino-acid biosynthesis; L-histidine biosynthesis; L-histidine from 5-phospho-alpha-D-ribose 1-diphosphate: step 3/9. Catalyzes the hydrolysis of the adenine ring of phosphoribosyl-AMP. The protein is Phosphoribosyl-AMP cyclohydrolase of Mycolicibacterium gilvum (strain PYR-GCK) (Mycobacterium gilvum (strain PYR-GCK)).